Consider the following 283-residue polypeptide: Large ribosomal subunit protein uL4 (283 aa).

The protein belongs to the universal ribosomal protein uL4 family. As to quaternary structure, part of the 50S ribosomal subunit.

Its function is as follows. One of the primary rRNA binding proteins, this protein initially binds near the 5'-end of the 23S rRNA. It is important during the early stages of 50S assembly. It makes multiple contacts with different domains of the 23S rRNA in the assembled 50S subunit and ribosome. Functionally, forms part of the polypeptide exit tunnel. In Pyrobaculum aerophilum (strain ATCC 51768 / DSM 7523 / JCM 9630 / CIP 104966 / NBRC 100827 / IM2), this protein is Large ribosomal subunit protein uL4.